The following is a 227-amino-acid chain: 2-C-methyl-D-erythritol 4-phosphate cytidylyltransferase (227 aa).

This sequence belongs to the IspD/TarI cytidylyltransferase family. IspD subfamily.

It catalyses the reaction 2-C-methyl-D-erythritol 4-phosphate + CTP + H(+) = 4-CDP-2-C-methyl-D-erythritol + diphosphate. The protein operates within isoprenoid biosynthesis; isopentenyl diphosphate biosynthesis via DXP pathway; isopentenyl diphosphate from 1-deoxy-D-xylulose 5-phosphate: step 2/6. Its function is as follows. Catalyzes the formation of 4-diphosphocytidyl-2-C-methyl-D-erythritol from CTP and 2-C-methyl-D-erythritol 4-phosphate (MEP). This chain is 2-C-methyl-D-erythritol 4-phosphate cytidylyltransferase, found in Dehalococcoides mccartyi (strain CBDB1).